The sequence spans 697 residues: Serine/threonine-protein kinase tousled-like 2 (697 aa).

2 disordered regions span residues 27–136 and 289–315; these read KAPL…TAPV and LAKR…NKTN. The segment covering 31–44 has biased composition (polar residues); the sequence is NSESSNQSLCSLGS. Positions 46–62 are enriched in basic and acidic residues; the sequence is SDKELEQTPEKKQNDQR. Low complexity predominate over residues 111–131; that stretch reads SSPQHSLSNPLPLPSQQCSPP. Coiled coils occupy residues 264-293 and 334-372; these read AFQN…AKRK and FKLR…IHNE. A Protein kinase domain is found at 387–666; sequence YLLLHLLGRG…VQQLACDPYL (280 aa). ATP-binding positions include 393-401 and Lys416; that span reads LGRGGFSEV. The active-site Proton acceptor is the Asp517.

Belongs to the protein kinase superfamily. Ser/Thr protein kinase family. Monomer. May form homodimers; homodimerization may enhance autophosphoylation and enzymatic activity. Heterodimer with TLK1. Mg(2+) serves as cofactor. Phosphorylated. Autophosphorylated; phosphorylation promotes the assembly of higher order oligomers and enzymatic activity.

It localises to the nucleus. The protein localises to the nucleoplasm. The protein resides in the cytoplasm. Its subcellular location is the perinuclear region. It is found in the cytoskeleton. It carries out the reaction L-seryl-[protein] + ATP = O-phospho-L-seryl-[protein] + ADP + H(+). It catalyses the reaction L-threonyl-[protein] + ATP = O-phospho-L-threonyl-[protein] + ADP + H(+). In terms of biological role, serine/threonine-protein kinase involved in the process of chromatin assembly and probably also DNA replication, transcription, repair, and chromosome segregation. Negative regulator of amino acid starvation-induced autophagy. This Xenopus tropicalis (Western clawed frog) protein is Serine/threonine-protein kinase tousled-like 2.